A 191-amino-acid polypeptide reads, in one-letter code: Fe/S biogenesis protein NfuA (191 aa).

The [4Fe-4S] cluster site is built by C149 and C152.

The protein belongs to the NfuA family. In terms of assembly, homodimer. It depends on [4Fe-4S] cluster as a cofactor.

Its function is as follows. Involved in iron-sulfur cluster biogenesis. Binds a 4Fe-4S cluster, can transfer this cluster to apoproteins, and thereby intervenes in the maturation of Fe/S proteins. Could also act as a scaffold/chaperone for damaged Fe/S proteins. The protein is Fe/S biogenesis protein NfuA of Pectobacterium carotovorum subsp. carotovorum (strain PC1).